We begin with the raw amino-acid sequence, 506 residues long: DEAD-box ATP-dependent RNA helicase CshA (506 aa).

The short motif at 2 to 30 (QNFKELGISDNTVQSLESMGFKEPTPIQK) is the Q motif element. The Helicase ATP-binding domain maps to 33-203 (IPYALQGIDI…QQFMKSPKII (171 aa)). Position 46 to 53 (46 to 53 (AQTGTGKT)) interacts with ATP. Residues 150 to 153 (DEAD) carry the DEAD box motif. The 162-residue stretch at 214–375 (QIEEFYTIVK…LRPPHRKEVL (162 aa)) folds into the Helicase C-terminal domain. Residues 436 to 506 (EKPLSRKGRN…KGRTFADHQK (71 aa)) are disordered. Residues 468 to 480 (KRSKGYSSKKKST) show a composition bias toward basic residues.

It belongs to the DEAD box helicase family. CshA subfamily. As to quaternary structure, oligomerizes, may be a member of the RNA degradosome.

The protein resides in the cytoplasm. The catalysed reaction is ATP + H2O = ADP + phosphate + H(+). DEAD-box RNA helicase possibly involved in RNA degradation. Unwinds dsRNA in both 5'- and 3'-directions, has RNA-dependent ATPase activity. The protein is DEAD-box ATP-dependent RNA helicase CshA of Staphylococcus aureus (strain MW2).